The following is a 294-amino-acid chain: MANITAQMVKELREKTGAGMMDCKKALVETEGDMEKAIDYLREKGIAKAAKKSDRVASEGMTHVISNEKHAVVLEVNAETDFVAKNDNFQQLVDALAKQILAVRPDSLEDALKTEMPNGQTVQDYITEAITKIGENISLRRFEVKEKADNSAFGEYIHMNGRIGVLTLLEGTTDTTVAKDVAMHIAAINPKYISREDVSSEEVAHEKEVLTQQALNEGKPANIVEKMVEGRLKKYLSEISLEDQPFVKNPDITVGEYVKQSGGKVVSFVRFEVGEGIEKKEDNFVEEVMSQVKK.

The interval 80 to 83 is involved in Mg(2+) ion dislocation from EF-Tu; the sequence is TDFV.

The protein belongs to the EF-Ts family.

It is found in the cytoplasm. Functionally, associates with the EF-Tu.GDP complex and induces the exchange of GDP to GTP. It remains bound to the aminoacyl-tRNA.EF-Tu.GTP complex up to the GTP hydrolysis stage on the ribosome. This is Elongation factor Ts from Listeria monocytogenes serovar 1/2a (strain ATCC BAA-679 / EGD-e).